A 269-amino-acid polypeptide reads, in one-letter code: Formamidopyrimidine-DNA glycosylase (269 aa).

Catalysis depends on proline 2, which acts as the Schiff-base intermediate with DNA. Residue glutamate 3 is the Proton donor of the active site. The active-site Proton donor; for beta-elimination activity is lysine 57. DNA contacts are provided by histidine 90, arginine 109, and lysine 150. Residues 235 to 269 (QVYGRKGEPCRVCGTPIVATKHAQRATFYCRQCQK) form an FPG-type zinc finger. Arginine 259 acts as the Proton donor; for delta-elimination activity in catalysis.

It belongs to the FPG family. As to quaternary structure, monomer. Requires Zn(2+) as cofactor.

The enzyme catalyses Hydrolysis of DNA containing ring-opened 7-methylguanine residues, releasing 2,6-diamino-4-hydroxy-5-(N-methyl)formamidopyrimidine.. The catalysed reaction is 2'-deoxyribonucleotide-(2'-deoxyribose 5'-phosphate)-2'-deoxyribonucleotide-DNA = a 3'-end 2'-deoxyribonucleotide-(2,3-dehydro-2,3-deoxyribose 5'-phosphate)-DNA + a 5'-end 5'-phospho-2'-deoxyribonucleoside-DNA + H(+). Functionally, involved in base excision repair of DNA damaged by oxidation or by mutagenic agents. Acts as a DNA glycosylase that recognizes and removes damaged bases. Has a preference for oxidized purines, such as 7,8-dihydro-8-oxoguanine (8-oxoG). Has AP (apurinic/apyrimidinic) lyase activity and introduces nicks in the DNA strand. Cleaves the DNA backbone by beta-delta elimination to generate a single-strand break at the site of the removed base with both 3'- and 5'-phosphates. The sequence is that of Formamidopyrimidine-DNA glycosylase from Escherichia coli O157:H7.